Here is a 340-residue protein sequence, read N- to C-terminus: Cell division protein FtsQ (340 aa).

Residues M1–P41 form a disordered region. The Cytoplasmic segment spans residues M1–P55. Positions P19 to P32 are enriched in pro residues. Residues L56–L78 form a helical membrane-spanning segment. At S79 to G340 the chain is on the periplasmic side. Residues F104 to R172 form the POTRA domain. A disordered region spans residues R308–G340. Low complexity predominate over residues A324–A333.

The protein belongs to the FtsQ/DivIB family. FtsQ subfamily.

Its subcellular location is the cell inner membrane. Functionally, essential cell division protein. The chain is Cell division protein FtsQ from Paracoccus denitrificans (strain Pd 1222).